The primary structure comprises 131 residues: Profilin-9 (131 aa).

The cysteines at positions 13 and 115 are disulfide-linked. Positions 81-97 match the Involved in PIP2 interaction motif; that stretch reads AVTRGKKGAGGITIKKT. Thr-111 carries the phosphothreonine modification.

The protein belongs to the profilin family. As to quaternary structure, occurs in many kinds of cells as a complex with monomeric actin in a 1:1 ratio. In terms of processing, phosphorylated by MAP kinases.

Its subcellular location is the cytoplasm. The protein localises to the cytoskeleton. Binds to actin and affects the structure of the cytoskeleton. At high concentrations, profilin prevents the polymerization of actin, whereas it enhances it at low concentrations. This is Profilin-9 from Phleum pratense (Common timothy).